The primary structure comprises 798 residues: KLRAQPAANDPGTDKTIKYSKIQSIIQKINSFTHENSLLANCRAVVELIDDLYRKLYSWFLHVLTFEDIQFPGDTFLDRLLKMDYCFTYYPSSNRHLIDLFEKTLDNQTFTNLDKFFDTSGNSPELLYQKTFSLKIFSKNLTAQDNGLYIYPLLKTDLSILDFLGTENILFHRGLIYHILHQKTIPQERENDLNKINQFFATVIQQVIETKSSCLPASLSQLLDTIFHFNRIGLNMETCRTYIEILSNHMATPDTQPIINTFTINLTHIVFTAHVFFICMENFSPTFIFYNRKKLILEQQRAILIIERNDYSTLWKQISDHIDCLFNVSLSESFFKEYTKGGNEDQKQFLYKNLFEKWGNVFFPFTYSVSTSNNSTAHHITTLELRDICKEVYQSDSPDAYESLLPYSTHPSFKTLYVKIYVIPMVSHITNLTFDKLQSDCRLLTLIHACKLLLPSQHLLLHYMAWLYAFSINVDHIDLGTFTVIKSVIFKIADHINVMTHTIYSPETNLLVSILLNAYTNYLQKYVNPWIKQTITANFSLIQTYITFTKQCASILATKCNINLDNLFIYITIGTDKIVTTSFCSFIATCRNLVRQHEEFEKSLQTIQISETTLTGMLRNIITSVSSSKELLTNEALQKFIDTVQRISQHVNETYQSISMNLEKCKTSNDILIESLKKIIYIVDVLSSNAILNTSLASRCLEAANLAVSNNSFTILEIKKDAVAVFKPFITQLFESMKPTTSLHKKLMSTQKLTTDHIPFLDTFDDRYNLVRHVERQLNWYAAHAEAAQQDLITPLKF.

The protein belongs to the herpesviridae HHV-1 UL37 family.

Its subcellular location is the virion tegument. The polypeptide is Capsid assembly protein UL37 homolog (U30) (Homo sapiens (Human)).